The chain runs to 187 residues: Large ribosomal subunit protein bL12cx (187 aa).

Residues 1 to 54 (MASTTLSIATTIRSSSPLTSASTHHFLSKPTAIEFPFRLSSSSSHRAINLRPIS) constitute a chloroplast transit peptide.

This sequence belongs to the bacterial ribosomal protein bL12 family.

It is found in the plastid. The protein localises to the chloroplast. The sequence is that of Large ribosomal subunit protein bL12cx (RPL12C) from Arabidopsis thaliana (Mouse-ear cress).